Here is a 115-residue protein sequence, read N- to C-terminus: DNA-directed RNA polymerase II subunit RPB11-b2 (115 aa).

The protein belongs to the archaeal Rpo11/eukaryotic RPB11/RPC19 RNA polymerase subunit family. Component of the RNA polymerase II (Pol II) complex consisting of 12 subunits.

It localises to the nucleus. DNA-dependent RNA polymerase catalyzes the transcription of DNA into RNA using the four ribonucleoside triphosphates as substrates. Component of RNA polymerase II which synthesizes mRNA precursors and many functional non-coding RNAs. Pol II is the central component of the basal RNA polymerase II transcription machinery. It is composed of mobile elements that move relative to each other. RPB11 is part of the core element with the central large cleft. In Homo sapiens (Human), this protein is DNA-directed RNA polymerase II subunit RPB11-b2 (POLR2J3).